The following is a 693-amino-acid chain: Translation factor GUF1 homolog, mitochondrial (693 aa).

Residues 51 to 63 are compositionally biased toward polar residues; the sequence is SSSSTEKPTTSGT. Residues 51–78 are disordered; the sequence is SSSSTEKPTTSGTINGGGGKQKAASQPK. In terms of domain architecture, tr-type G spans 88 to 270; sequence QKIRNFSIIA…RIVQMVPPPP (183 aa). Residues 97 to 104, 163 to 167, and 217 to 220 each bind GTP; these read AHIDHGKS, DTPGH, and NKID.

It belongs to the TRAFAC class translation factor GTPase superfamily. Classic translation factor GTPase family. LepA subfamily.

It is found in the mitochondrion inner membrane. It catalyses the reaction GTP + H2O = GDP + phosphate + H(+). In terms of biological role, promotes mitochondrial protein synthesis. May act as a fidelity factor of the translation reaction, by catalyzing a one-codon backward translocation of tRNAs on improperly translocated ribosomes. Binds to mitochondrial ribosomes in a GTP-dependent manner. The polypeptide is Translation factor GUF1 homolog, mitochondrial (Phaeodactylum tricornutum (strain CCAP 1055/1)).